The primary structure comprises 743 residues: Sulfhydryl oxidase 1 (743 aa).

Residues 1–42 (MWRRRARSGGGGGGGGGGAAPRCRWWPAVLALLAAALPAARS) form the signal peptide. A Thioredoxin domain is found at 43–166 (RSLYSPSDPL…LRRAIITNLE (124 aa)). Active-site nucleophile residues include Cys-80 and Cys-83. 2 disulfide bridges follow: Cys-80-Cys-83 and Cys-111-Cys-120. Residues Asn-254, Asn-288, Asn-295, Asn-371, and Asn-401 are each glycosylated (N-linked (GlcNAc...) asparagine). A disulfide bridge connects residues Cys-407 and Cys-419. Positions 410–513 (SEPHFRGYPC…EDPQFPKLQW (104 aa)) constitute an ERV/ALR sulfhydryl oxidase domain. Residues Arg-415, Trp-422, His-426, Glu-461, His-465, 488-495 (WSHHNEVN), Lys-510, and Trp-513 contribute to the FAD site. Cys-459 and Cys-462 are oxidised to a cystine. A disulfide bond links Cys-519 and Cys-522. The tract at residues 567 to 617 (ASARLSTAGLREKEEEERKEEEEEGEKETEKPHREGETGRPGSSELRRPSI) is disordered. Residues 580–593 (EEEERKEEEEEGEK) show a composition bias toward acidic residues. A compositionally biased stretch (basic and acidic residues) spans 594–604 (ETEKPHREGET). Residues 707-727 (SLCIALYFLSSMCLLGMYTFF) form a helical membrane-spanning segment.

The protein belongs to the quiescin-sulfhydryl oxidase (QSOX) family. FAD is required as a cofactor. N-glycosylated. O-glycosylated on Thr and Ser residues.

Its subcellular location is the golgi apparatus membrane. It is found in the secreted. It catalyses the reaction 2 R'C(R)SH + O2 = R'C(R)S-S(R)CR' + H2O2. Its function is as follows. Catalyzes the oxidation of sulfhydryl groups in peptide and protein thiols to disulfides with the reduction of oxygen to hydrogen peroxide. Plays a role in disulfide bond formation in a variety of extracellular proteins. In fibroblasts, required for normal incorporation of laminin into the extracellular matrix, and thereby for normal cell-cell adhesion and cell migration. This chain is Sulfhydryl oxidase 1 (QSOX1), found in Gallus gallus (Chicken).